Reading from the N-terminus, the 430-residue chain is Adenylosuccinate synthetase (430 aa).

Residues 13-19 (GDEGKGK) and 41-43 (GHT) each bind GTP. Aspartate 14 serves as the catalytic Proton acceptor. Residues aspartate 14 and glycine 41 each coordinate Mg(2+). Residues 14–17 (DEGK), 39–42 (NAGH), threonine 130, arginine 144, glutamine 225, threonine 240, and arginine 304 each bind IMP. Histidine 42 functions as the Proton donor in the catalytic mechanism. 300–306 (STTGRAR) contacts substrate. GTP contacts are provided by residues arginine 306, 332-334 (KLD), and 414-416 (STG).

The protein belongs to the adenylosuccinate synthetase family. As to quaternary structure, homodimer. Mg(2+) is required as a cofactor.

It is found in the cytoplasm. It catalyses the reaction IMP + L-aspartate + GTP = N(6)-(1,2-dicarboxyethyl)-AMP + GDP + phosphate + 2 H(+). It functions in the pathway purine metabolism; AMP biosynthesis via de novo pathway; AMP from IMP: step 1/2. Its function is as follows. Plays an important role in the de novo pathway of purine nucleotide biosynthesis. Catalyzes the first committed step in the biosynthesis of AMP from IMP. The protein is Adenylosuccinate synthetase of Thioalkalivibrio sulfidiphilus (strain HL-EbGR7).